A 284-amino-acid chain; its full sequence is Proteasome subunit beta 1 (284 aa).

Positions 1 to 56 are cleaved as a propeptide — removed in mature form; by autocatalysis; the sequence is MASHDSYTGRLPGAFMNPGTSSFTEFLASYNPDLLPGRHMTALAGGMPGNVEAPHA. Catalysis depends on Thr-57, which acts as the Nucleophile.

Belongs to the peptidase T1B family. In terms of assembly, the 20S proteasome core is composed of 14 alpha and 14 beta subunits that assemble into four stacked heptameric rings, resulting in a barrel-shaped structure. The two inner rings, each composed of seven catalytic beta subunits, are sandwiched by two outer rings, each composed of seven alpha subunits. The catalytic chamber with the active sites is on the inside of the barrel. Has a gated structure, the ends of the cylinder being occluded by the N-termini of the alpha-subunits. Is capped by the proteasome-associated ATPase, ARC.

The protein localises to the cytoplasm. It catalyses the reaction Cleavage of peptide bonds with very broad specificity.. It functions in the pathway protein degradation; proteasomal Pup-dependent pathway. The formation of the proteasomal ATPase ARC-20S proteasome complex, likely via the docking of the C-termini of ARC into the intersubunit pockets in the alpha-rings, may trigger opening of the gate for substrate entry. Interconversion between the open-gate and close-gate conformations leads to a dynamic regulation of the 20S proteasome proteolysis activity. Component of the proteasome core, a large protease complex with broad specificity involved in protein degradation. In Thermomonospora curvata (strain ATCC 19995 / DSM 43183 / JCM 3096 / KCTC 9072 / NBRC 15933 / NCIMB 10081 / Henssen B9), this protein is Proteasome subunit beta 1.